We begin with the raw amino-acid sequence, 200 residues long: Thymidine kinase (200 aa).

Residues 15-22 (GPMYSGKS) and 88-91 (DEVQ) each bind ATP. E89 acts as the Proton acceptor in catalysis. Zn(2+) is bound by residues C145, C148, C177, and C180.

This sequence belongs to the thymidine kinase family. In terms of assembly, homotetramer.

The protein resides in the cytoplasm. It carries out the reaction thymidine + ATP = dTMP + ADP + H(+). The chain is Thymidine kinase from Mycoplasma mobile (strain ATCC 43663 / 163K / NCTC 11711) (Mesomycoplasma mobile).